A 907-amino-acid chain; its full sequence is Probable dipeptidyl-aminopeptidase B (907 aa).

Positions 1 to 26 (MPRQRAPKEEEAELLTKQERSTRSSE) are enriched in basic and acidic residues. Residues 1–70 (MPRQRAPKEE…EKYTDEDDEA (70 aa)) form a disordered region. Topologically, residues 1–93 (MPRQRAPKEE…PVAVDKKTRR (93 aa)) are cytoplasmic. Residues 30–44 (DASVSSISTTSLVLE) are compositionally biased toward low complexity. The chain crosses the membrane as a helical; Signal-anchor for type II membrane protein span at residues 94 to 114 (WLWIVGIACVTGWALALVFFL). The Vacuolar segment spans residues 115-907 (MSGSYKHVST…SQVDARLERR (793 aa)). N-linked (GlcNAc...) asparagine glycosylation occurs at Asn-560. Ser-751 serves as the catalytic Charge relay system. Residue Asn-805 is glycosylated (N-linked (GlcNAc...) asparagine). Residues Asp-828 and His-861 each act as charge relay system in the active site.

This sequence belongs to the peptidase S9B family.

It is found in the vacuole membrane. It carries out the reaction Release of an N-terminal dipeptide, Xaa-Yaa-|-Zaa-, from a polypeptide, preferentially when Yaa is Pro, provided Zaa is neither Pro nor hydroxyproline.. Its function is as follows. Type IV dipeptidyl-peptidase which removes N-terminal dipeptides sequentially from polypeptides having unsubstituted N-termini provided that the penultimate residue is proline. In Pyrenophora teres f. teres (strain 0-1) (Barley net blotch fungus), this protein is Probable dipeptidyl-aminopeptidase B (dapB).